Reading from the N-terminus, the 174-residue chain is Bacterial proteasome activator (174 aa).

The segment at 153-174 (QGALPPGVGKSGQHGHGTGQYL) is disordered. Residues 161–174 (GKSGQHGHGTGQYL) are compositionally biased toward gly residues. Positions 172–174 (QYL) match the HbYX motif motif.

It belongs to the Bpa family. As to quaternary structure, forms a homooligomeric, either hexameric or heptameric, ring-like structure which stacks co-axially with the proteasomal alpha-rings.

Interacts with the core proteasome alpha-subunit (PrcA) through its C-terminal hydrophobic-tyrosine-X motif (HbYX motif). Interaction of Bpa with the proteasome stimulates proteasomal peptidase and casein degradation activity, which suggests Bpa could play a role in the removal of non-native or damaged proteins by influencing the conformation of the proteasome complex upon interaction. The chain is Bacterial proteasome activator (bpa) from Mycobacterium bovis (strain ATCC BAA-935 / AF2122/97).